Here is a 454-residue protein sequence, read N- to C-terminus: Bifunctional protein GlmU (454 aa).

The tract at residues methionine 1–arginine 233 is pyrophosphorylase. UDP-N-acetyl-alpha-D-glucosamine contacts are provided by residues leucine 13 to glycine 16, lysine 27, glutamine 80, glycine 85 to threonine 86, tyrosine 108 to aspartate 110, glycine 145, glutamate 159, asparagine 174, and asparagine 231. Residue aspartate 110 participates in Mg(2+) binding. Position 231 (asparagine 231) interacts with Mg(2+). Residues alanine 234–alanine 254 are linker. The tract at residues glycine 255–aspartate 454 is N-acetyltransferase. 2 residues coordinate UDP-N-acetyl-alpha-D-glucosamine: arginine 320 and lysine 338. The Proton acceptor role is filled by histidine 350. Residues tyrosine 353 and asparagine 364 each coordinate UDP-N-acetyl-alpha-D-glucosamine. Acetyl-CoA is bound by residues alanine 367, asparagine 373–tyrosine 374, serine 392, serine 410, and arginine 427.

It in the N-terminal section; belongs to the N-acetylglucosamine-1-phosphate uridyltransferase family. In the C-terminal section; belongs to the transferase hexapeptide repeat family. In terms of assembly, homotrimer. Mg(2+) is required as a cofactor.

Its subcellular location is the cytoplasm. The catalysed reaction is alpha-D-glucosamine 1-phosphate + acetyl-CoA = N-acetyl-alpha-D-glucosamine 1-phosphate + CoA + H(+). The enzyme catalyses N-acetyl-alpha-D-glucosamine 1-phosphate + UTP + H(+) = UDP-N-acetyl-alpha-D-glucosamine + diphosphate. Its pathway is nucleotide-sugar biosynthesis; UDP-N-acetyl-alpha-D-glucosamine biosynthesis; N-acetyl-alpha-D-glucosamine 1-phosphate from alpha-D-glucosamine 6-phosphate (route II): step 2/2. The protein operates within nucleotide-sugar biosynthesis; UDP-N-acetyl-alpha-D-glucosamine biosynthesis; UDP-N-acetyl-alpha-D-glucosamine from N-acetyl-alpha-D-glucosamine 1-phosphate: step 1/1. It participates in bacterial outer membrane biogenesis; LPS lipid A biosynthesis. Its function is as follows. Catalyzes the last two sequential reactions in the de novo biosynthetic pathway for UDP-N-acetylglucosamine (UDP-GlcNAc). The C-terminal domain catalyzes the transfer of acetyl group from acetyl coenzyme A to glucosamine-1-phosphate (GlcN-1-P) to produce N-acetylglucosamine-1-phosphate (GlcNAc-1-P), which is converted into UDP-GlcNAc by the transfer of uridine 5-monophosphate (from uridine 5-triphosphate), a reaction catalyzed by the N-terminal domain. This Jannaschia sp. (strain CCS1) protein is Bifunctional protein GlmU.